Consider the following 261-residue polypeptide: Neurexophilin-2 (261 aa).

Positions 1 to 22 (MSLRPLPLLVVPGLLQLLFCDS) are cleaved as a signal peptide. An II region spans residues 23–87 (EEVIHNTESV…WDWLANITEI (65 aa)). N-linked (GlcNAc...) asparagine glycans are attached at residues asparagine 83, asparagine 136, asparagine 146, and asparagine 152. The tract at residues 88–166 (QEQLARTKRR…LVPPSKVVEF (79 aa)) is III. Residues 167–175 (EISPQSTLE) are IV (linker domain). Residues 176 to 261 (TKESKSFNCH…HSETPYLSFG (86 aa)) form a v (Cys-rich) region.

Belongs to the neurexophilin family. In terms of processing, may be proteolytically processed at the boundary between the N-terminal non-conserved and the central conserved domain in neuron-like cells.

The protein resides in the secreted. Its function is as follows. May be signaling molecules that resemble neuropeptides and that act by binding to alpha-neurexins and possibly other receptors. The chain is Neurexophilin-2 (Nxph2) from Mus musculus (Mouse).